A 65-amino-acid chain; its full sequence is Large ribosomal subunit protein bL35 (65 aa).

The tract at residues 1–22 is disordered; that stretch reads MPKLKTKSGAAKRFKKTGKGGF.

The protein belongs to the bacterial ribosomal protein bL35 family.

The sequence is that of Large ribosomal subunit protein bL35 from Francisella philomiragia subsp. philomiragia (strain ATCC 25017 / CCUG 19701 / FSC 153 / O#319-036).